A 155-amino-acid chain; its full sequence is Transcription antitermination protein NusB (155 aa).

Belongs to the NusB family.

Its function is as follows. Involved in transcription antitermination. Required for transcription of ribosomal RNA (rRNA) genes. Binds specifically to the boxA antiterminator sequence of the ribosomal RNA (rrn) operons. The protein is Transcription antitermination protein NusB of Vibrio campbellii (strain ATCC BAA-1116).